We begin with the raw amino-acid sequence, 225 residues long: Probable iron export ATP-binding protein FetA (225 aa).

Residues L8–A225 form the ABC transporter domain. Position 40-47 (G40–S47) interacts with ATP.

This sequence belongs to the ABC transporter superfamily. The complex is composed of two ATP-binding proteins (FetA) and two transmembrane proteins (FetB).

It is found in the cell inner membrane. Its function is as follows. Part of the ABC transporter complex FetAB, which is probably involved in iron export and enhances resistance to H(2)O(2)-mediated oxidative stress. Probably responsible for energy coupling to the transport system. This chain is Probable iron export ATP-binding protein FetA (fetA), found in Escherichia coli (strain K12).